A 186-amino-acid chain; its full sequence is Large ribosomal subunit protein uL6 (186 aa).

Belongs to the universal ribosomal protein uL6 family. In terms of assembly, part of the 50S ribosomal subunit.

Functionally, this protein binds to the 23S rRNA, and is important in its secondary structure. It is located near the subunit interface in the base of the L7/L12 stalk, and near the tRNA binding site of the peptidyltransferase center. The polypeptide is Large ribosomal subunit protein uL6 (Sulfurisphaera tokodaii (strain DSM 16993 / JCM 10545 / NBRC 100140 / 7) (Sulfolobus tokodaii)).